Consider the following 666-residue polypeptide: MDPQQRLLLEVVYEALEDAGITLDEIQGSLTSVYCGCFTNDYNAMTTKDLEYYPKYTVTGTGNSILANRISYFYNLHGPSATVDTACSSSLVCFHLGAQSLRDAEADISIVVGSALHFDPNIFITMTDLGMLSTDGRCRHGDAAGSGYVRGEGIAAMVLKRQDRAQADGDHIRAVVRGTGVNHDGRKQGITLPSARAQADLITSTYERAGLEPAETTYVECHGTGTKAGDPRELRAVHEVFCRHRPDTLHVGSVKTNIGHLEGASGIAGLMKATMALEKKIIPPNMHFSTPNPEVDFKNWKLEIPTEPKVWEMGRRTIPRRASINSFGYGGTNAHAILEEYNSFGSKTTACQQPTVSLPPELAAMVERRPYLLPLTSHSERAGELWAERLAQYLTENEASVADVALSLSTRRTMHRFRSFAVSADMEKVIERIRDPPPGAAWKSKLDTIPRIGFVFTGQGAQWFGMARSLLEQCPLFLQTIRKCDRILQALPSHRPTWSVEAELLKSQQDTMLGRTEYSQPICTAVQLALVDVLAHWGVKPSGVVGHSSGELAATYAAGLLSFENALVAAYYRGVHMGSGAAAPGSMPGAMMAVGMTEAEVTAELEPYRGRIAIAAMNSPSSFTVSGDEDAVVELQQALTDRKVFARRLQVAQACVFVHSLVIKRY.

The Ketosynthase family 3 (KS3) domain occupies 1 to 340; it reads MDPQQRLLLE…GTNAHAILEE (340 aa). Active-site for beta-ketoacyl synthase activity residues include Cys-87, His-222, and His-260. The malonyl-CoA:ACP transacylase (MAT) domain stretch occupies residues 455 to 665; sequence VFTGQGAQWF…VFVHSLVIKR (211 aa). Residue Ser-548 is the For malonyltransferase activity of the active site.

This sequence in the C-terminal section; belongs to the NRP synthetase family.

Its pathway is secondary metabolite biosynthesis. Hybrid PKS-NRPS synthetase; part of the gene cluster that mediates the biosynthesis of pyranterreones, a family of antioxidative compounds. The first step of pyranonigrins biosynthesis is performed by the hybrid PKS-NRPS synthetase pytA that condenses 4 malonyl-CoA units ato the acetyl starter unit by the modular PKS of pytA. The acyl chain is then connected to an L-serine through the amide bond by the modular NRPS of pytA. A tetramic acid is formed and released from the PKS-NRPS pytA to give pyranterreone 5 with the help of the thioesterase pytI. Pyranterreone 5 could be methylated by pytC to afford pyranterreone 6. Both pyranterreones 5 and 6 are subsequently oxidized by the FAD-linked oxidoreductase pytB and the cytochrome P450 monooxygenase pytD to form the fused gamma-pyrone core, resulting in pyranterreones 7 and 11, respectively. The hydroxy group at C-8 of pyranterreones 7 and 11 are dehydrated by the aspartyl protease pytH to form a delta-7 double bond to give pyranterreones 3 and 1, 2 accordingly. The exo-methylene of pyranterreone 3 could be reduced into a pendant methyl by reductase pytE to provide pyranterreone 4, also known as cordylactam. Pyranterreone 4 can be reconverted to pyranterreone 3 through pytB-catalyzed dehydrogenation or further oxidized to pyranterreones 9 and 10. In Aspergillus terreus (strain NIH 2624 / FGSC A1156), this protein is Hybrid PKS-NRPS synthetase pytA.